Reading from the N-terminus, the 446-residue chain is Na(+)-translocating NADH-quinone reductase subunit A (446 aa).

Belongs to the NqrA family. As to quaternary structure, composed of six subunits; NqrA, NqrB, NqrC, NqrD, NqrE and NqrF.

It catalyses the reaction a ubiquinone + n Na(+)(in) + NADH + H(+) = a ubiquinol + n Na(+)(out) + NAD(+). Its function is as follows. NQR complex catalyzes the reduction of ubiquinone-1 to ubiquinol by two successive reactions, coupled with the transport of Na(+) ions from the cytoplasm to the periplasm. NqrA to NqrE are probably involved in the second step, the conversion of ubisemiquinone to ubiquinol. This chain is Na(+)-translocating NADH-quinone reductase subunit A, found in Vibrio atlanticus (strain LGP32) (Vibrio splendidus (strain Mel32)).